The primary structure comprises 957 residues: Valine--tRNA ligase (957 aa).

A 'HIGH' region motif is present at residues 42–52 (PNVTGSLHMGH). A 'KMSKS' region motif is present at residues 554–558 (KMSKS). Lysine 557 contacts ATP. The stretch at 890–956 (DKDAELARLA…LEAQQETIAA (67 aa)) forms a coiled coil.

Belongs to the class-I aminoacyl-tRNA synthetase family. ValS type 1 subfamily. Monomer.

Its subcellular location is the cytoplasm. The catalysed reaction is tRNA(Val) + L-valine + ATP = L-valyl-tRNA(Val) + AMP + diphosphate. Functionally, catalyzes the attachment of valine to tRNA(Val). As ValRS can inadvertently accommodate and process structurally similar amino acids such as threonine, to avoid such errors, it has a 'posttransfer' editing activity that hydrolyzes mischarged Thr-tRNA(Val) in a tRNA-dependent manner. The protein is Valine--tRNA ligase of Aliivibrio fischeri (strain ATCC 700601 / ES114) (Vibrio fischeri).